Reading from the N-terminus, the 88-residue chain is Cell division topological specificity factor (88 aa).

The protein belongs to the MinE family.

Prevents the cell division inhibition by proteins MinC and MinD at internal division sites while permitting inhibition at polar sites. This ensures cell division at the proper site by restricting the formation of a division septum at the midpoint of the long axis of the cell. In Aromatoleum aromaticum (strain DSM 19018 / LMG 30748 / EbN1) (Azoarcus sp. (strain EbN1)), this protein is Cell division topological specificity factor.